A 322-amino-acid polypeptide reads, in one-letter code: MTEQSSGSATEQATEQETAKQETGRKNEQPEERTVTDGRYLYCLINTTTAESETGSEQESKAGSEQESKAGSEQESEQATVDWSTTGVDDNTVYVIEGESVGAVVHDCERIYDTESPEQVKQWVLRHQHVVDAASDVFGTPLPMRFNTILEGGDTSVTQWLHENHDTVREELTSFAGTWEYRIHLFWEPSTFEAQIEDEDDQLQELQQRQEEAGSGKSFLLKKQYDKRLRERKQNRRAELTTTLQETVRPVVRELLKQGSGSQLAEDTTPTKKEQVTRLAVLADEENETVLGDRLDEIVEQDGVSIKFTGPWPPYTFAPDLG.

The disordered stretch occupies residues 1 to 85 (MTEQSSGSAT…SEQATVDWST (85 aa)). Basic and acidic residues predominate over residues 17–36 (ETAKQETGRKNEQPEERTVT). The span at 45–57 (INTTTAESETGSE) shows a compositional bias: polar residues. Positions 58–72 (QESKAGSEQESKAGS) are enriched in basic and acidic residues. Residues 73-85 (EQESEQATVDWST) show a composition bias toward polar residues.

It belongs to the gas vesicle GvpF/GvpL family. In terms of assembly, gvpF to GvpM interact with each other in vitro, and may form multi-subunit complex(es). Interacts with GvpC, GvpN and GvpO.

It localises to the gas vesicle. Functionally, proteins GvpF to GvpM might be involved in nucleating gas vesicle formation. A minor component of the gas vesicle. Gas vesicles are small, hollow, gas filled protein structures that are found in several microbial planktonic microorganisms. They allow positioning of halobacteria at the optimal depth for growth in the poorly aerated, shallow brine pools of their habitat. Expression of a 9.5 kb mc-vac DNA fragment containing 2 divergently transcribed regions (gvpD-gvpE-gvpF-gvpG-gvpH-gvpI-gvpJ-gvpK-gvpL-gvpM and gvpA-gvpC-gvpN-gvpO) allows H.volcanii to produce gas vesicles. This Haloferax mediterranei (strain ATCC 33500 / DSM 1411 / JCM 8866 / NBRC 14739 / NCIMB 2177 / R-4) (Halobacterium mediterranei) protein is Gas vesicle protein L.